Reading from the N-terminus, the 604-residue chain is Pescadillo homolog (604 aa).

Residues 349-448 (PTSTLFSKFI…ELLPVNKYAP (100 aa)) form the BRCT domain. 2 disordered regions span residues 452-562 (LPPH…MTNK) and 579-604 (TRTQ…LSKK). 2 coiled-coil regions span residues 468-522 (EAEK…LEAA) and 573-604 (GIDK…LSKK). A compositionally biased stretch (acidic residues) spans 476–510 (ENAEEEEEDEVDEDDEDADEDEEDEEEEDEEEDED). Residues 593–604 (KTKAQLDKLSKK) are compositionally biased toward basic and acidic residues.

The protein belongs to the pescadillo family. As to quaternary structure, component of the NOP7 complex, composed of ERB1, NOP7 and YTM1. The complex is held together by ERB1, which interacts with NOP7 via its N-terminal domain and with YTM1 via a high-affinity interaction between the seven-bladed beta-propeller domains of the 2 proteins. The NOP7 complex associates with the 66S pre-ribosome.

It is found in the nucleus. Its subcellular location is the nucleolus. The protein localises to the nucleoplasm. In terms of biological role, component of the NOP7 complex, which is required for maturation of the 25S and 5.8S ribosomal RNAs and formation of the 60S ribosome. In Scheffersomyces stipitis (strain ATCC 58785 / CBS 6054 / NBRC 10063 / NRRL Y-11545) (Yeast), this protein is Pescadillo homolog.